The primary structure comprises 1398 residues: DNA-directed RNA polymerase subunit beta' (1398 aa).

Zn(2+) is bound by residues cysteine 70, cysteine 72, cysteine 85, and cysteine 88. Mg(2+) is bound by residues aspartate 460, aspartate 462, and aspartate 464. Cysteine 814, cysteine 888, cysteine 895, and cysteine 898 together coordinate Zn(2+).

It belongs to the RNA polymerase beta' chain family. In terms of assembly, the RNAP catalytic core consists of 2 alpha, 1 beta, 1 beta' and 1 omega subunit. When a sigma factor is associated with the core the holoenzyme is formed, which can initiate transcription. Requires Mg(2+) as cofactor. The cofactor is Zn(2+).

It catalyses the reaction RNA(n) + a ribonucleoside 5'-triphosphate = RNA(n+1) + diphosphate. DNA-dependent RNA polymerase catalyzes the transcription of DNA into RNA using the four ribonucleoside triphosphates as substrates. The sequence is that of DNA-directed RNA polymerase subunit beta' from Pseudomonas putida (Arthrobacter siderocapsulatus).